Reading from the N-terminus, the 74-residue chain is Putative protein YozX (74 aa).

The polypeptide is Putative protein YozX (yozX) (Bacillus subtilis (strain 168)).